A 73-amino-acid polypeptide reads, in one-letter code: Putative sulfur carrier protein AF_0556 (73 aa).

Catalysis depends on Cys11, which acts as the Cysteine persulfide intermediate.

This sequence belongs to the sulfur carrier protein TusA family.

This is Putative sulfur carrier protein AF_0556 from Archaeoglobus fulgidus (strain ATCC 49558 / DSM 4304 / JCM 9628 / NBRC 100126 / VC-16).